Consider the following 1162-residue polypeptide: Nucleoporin nup132 (1162 aa).

It belongs to the nucleoporin Nup133 family. In terms of assembly, component of the npc107-120 complex which consists of nup85, nup107, nup120, nup131, nup132 and seh1. Interacts with nup107.

The protein resides in the nucleus envelope. Its function is as follows. Functions as a component of the nuclear pore complex (NPC). NPC components, collectively referred to as nucleoporins (NUPs), can play the role of both NPC structural components and of docking or interaction partners for transiently associated nuclear transport factors. Active directional transport is assured by both, a Phe-Gly (FG) repeat affinity gradient for these transport factors across the NPC and a transport cofactor concentration gradient across the nuclear envelope. This is Nucleoporin nup132 (nup132) from Schizosaccharomyces pombe (strain 972 / ATCC 24843) (Fission yeast).